The following is a 297-amino-acid chain: Cbb3-type cytochrome c oxidase subunit CcoP (297 aa).

Residues 1-35 (MSKKPTTKKEVQTTGHSWDGIEELNTPLPRWWLWT) are Cytoplasmic-facing. Residues 36–56 (FYATIVWGVAYSIAMPAWPIF) traverse the membrane as a helical segment. Topologically, residues 57-297 (ASGATPGILG…SYVHSLGGGQ (241 aa)) are periplasmic. Cytochrome c domains follow at residues 108-199 (YTRN…LKIS) and 206-294 (ARAT…HSLG). Cys121, Cys124, His125, Met174, Cys219, Cys222, His223, and Met264 together coordinate heme c.

Belongs to the CcoP / FixP family. In terms of assembly, component of the cbb3-type cytochrome c oxidase at least composed of CcoN, CcoO, CcoQ and CcoP. Interacts with CcoH (via transmembrane domain). The cofactor is heme c.

It is found in the cell inner membrane. It participates in energy metabolism; oxidative phosphorylation. Its function is as follows. C-type cytochrome. Part of the cbb3-type cytochrome c oxidase complex. CcoP subunit is required for transferring electrons from donor cytochrome c via its heme groups to CcoO subunit. From there, electrons are shuttled to the catalytic binuclear center of CcoN subunit where oxygen reduction takes place. The complex also functions as a proton pump. The polypeptide is Cbb3-type cytochrome c oxidase subunit CcoP (Rhodobacter capsulatus (strain ATCC BAA-309 / NBRC 16581 / SB1003)).